Reading from the N-terminus, the 274-residue chain is Dermonecrotic toxin LspiSicTox-betaIII2 (274 aa).

The active site involves histidine 5. Residues glutamate 25 and aspartate 27 each contribute to the Mg(2+) site. The active-site Nucleophile is the histidine 41. 2 disulfides stabilise this stretch: cysteine 45–cysteine 51 and cysteine 47–cysteine 189. Aspartate 85 contributes to the Mg(2+) binding site.

It belongs to the arthropod phospholipase D family. Class II subfamily. Mg(2+) is required as a cofactor. As to expression, expressed by the venom gland.

It is found in the secreted. It carries out the reaction an N-(acyl)-sphingosylphosphocholine = an N-(acyl)-sphingosyl-1,3-cyclic phosphate + choline. It catalyses the reaction an N-(acyl)-sphingosylphosphoethanolamine = an N-(acyl)-sphingosyl-1,3-cyclic phosphate + ethanolamine. The enzyme catalyses a 1-acyl-sn-glycero-3-phosphocholine = a 1-acyl-sn-glycero-2,3-cyclic phosphate + choline. The catalysed reaction is a 1-acyl-sn-glycero-3-phosphoethanolamine = a 1-acyl-sn-glycero-2,3-cyclic phosphate + ethanolamine. Its function is as follows. Dermonecrotic toxins cleave the phosphodiester linkage between the phosphate and headgroup of certain phospholipids (sphingolipid and lysolipid substrates), forming an alcohol (often choline) and a cyclic phosphate. This toxin acts on sphingomyelin (SM). It may also act on ceramide phosphoethanolamine (CPE), lysophosphatidylcholine (LPC) and lysophosphatidylethanolamine (LPE), but not on lysophosphatidylserine (LPS), and lysophosphatidylglycerol (LPG). It acts by transphosphatidylation, releasing exclusively cyclic phosphate products as second products. Induces dermonecrosis, hemolysis, increased vascular permeability, edema, inflammatory response, and platelet aggregation. The protein is Dermonecrotic toxin LspiSicTox-betaIII2 of Loxosceles spinulosa (Recluse spider).